Here is a 372-residue protein sequence, read N- to C-terminus: 3-isopropylmalate dehydrogenase (372 aa).

79–90 (GPKWQGGAVRPE) provides a ligand contact to NAD(+). Arg97, Arg107, Arg136, and Asp225 together coordinate substrate. Residues Asp225, Asp250, and Asp254 each contribute to the Mg(2+) site. Position 289-300 (289-300 (GSAPDLPAGKAN)) interacts with NAD(+).

Belongs to the isocitrate and isopropylmalate dehydrogenases family. As to quaternary structure, homodimer. The cofactor is Mg(2+). Mn(2+) is required as a cofactor.

The protein localises to the cytoplasm. It carries out the reaction (2R,3S)-3-isopropylmalate + NAD(+) = 4-methyl-2-oxopentanoate + CO2 + NADH. It functions in the pathway amino-acid biosynthesis; L-leucine biosynthesis; L-leucine from 3-methyl-2-oxobutanoate: step 3/4. Catalyzes the oxidation of 3-carboxy-2-hydroxy-4-methylpentanoate (3-isopropylmalate) to 3-carboxy-4-methyl-2-oxopentanoate. The product decarboxylates to 4-methyl-2 oxopentanoate. This is 3-isopropylmalate dehydrogenase (LEU2) from Eremothecium gossypii (strain ATCC 10895 / CBS 109.51 / FGSC 9923 / NRRL Y-1056) (Yeast).